Consider the following 463-residue polypeptide: Glucagon-like peptide 1 receptor (463 aa).

The first 21 residues, 1–21 (MASTPSLLRLALLLLGAVGRA), serve as a signal peptide directing secretion. Residues 22–139 (GPRPQGTTVS…KRGERNFPEE (118 aa)) are Extracellular-facing. 3 disulfide bridges follow: cysteine 46-cysteine 71, cysteine 62-cysteine 104, and cysteine 85-cysteine 126. 3 N-linked (GlcNAc...) asparagine glycosylation sites follow: asparagine 63, asparagine 82, and asparagine 115. Residues 140–164 (QLLSLYIIYTVGYALSFSALVIASA) form a helical membrane-spanning segment. At 165 to 175 (ILVGFRHLHCT) the chain is on the cytoplasmic side. Residues 176-201 (RNYIHLNLFASFILRALSVFIKDAAL) form a helical membrane-spanning segment. Topologically, residues 202–227 (KWMYSTAAQQHQWDGLLSYQDSLGCR) are extracellular. Residues cysteine 226 and cysteine 296 are joined by a disulfide bond. The helical transmembrane segment at 228–251 (LVFLLMQYCVAANYYWLLVEGVYL) threads the bilayer. Residues 252-265 (YTLLAFSVFSEQRI) lie on the Cytoplasmic side of the membrane. A helical membrane pass occupies residues 266 to 290 (FKLYLSIGWGVPLLFVIPWGIVKYL). Residues 291-305 (YEDEGCWTRNSNMNY) are Extracellular-facing. Residues 306–328 (WLIIRLPILFAIGVNFLIFIRVI) traverse the membrane as a helical segment. Over 329 to 348 (CIVVSKLKANLMCKTDIKCR) the chain is Cytoplasmic. Position 341 is an ADP-ribosylcysteine (cysteine 341). The residue at position 348 (arginine 348) is an ADP-ribosylarginine. A helical membrane pass occupies residues 349–370 (LAKSTLTLIPLLGTHEVIFAFV). Residues 352 to 355 (STLT) are important for allosteric inhibitor binding. Topologically, residues 371–383 (MDEHARGTLRFIK) are extracellular. The chain crosses the membrane as a helical span at residues 384–404 (LFTELSFTSFQGLMVAILYCF). Residues 405 to 463 (VNNEVQMEFRKCWERWRLEHLNIQRDCSMKPLKCPTSSVSSGATVGSSVYAATCQSSYS) lie on the Cytoplasmic side of the membrane.

Belongs to the G-protein coupled receptor 2 family. May form homodimers and heterodimers with GIPR. N-glycosylation enhances cell surface expression and lengthens receptor half-life by preventing degradation in the ER. Detected in pancreatic islets (at protein level). Detected in pancreatic islets and lungs.

It is found in the cell membrane. In terms of biological role, G-protein coupled receptor for glucagon-like peptide 1 (GLP-1). Ligand binding triggers activation of a signaling cascade that leads to the activation of adenylyl cyclase and increased intracellular cAMP levels. Plays a role in regulating insulin secretion in response to GLP-1. This is Glucagon-like peptide 1 receptor (Glp1r) from Mus musculus (Mouse).